The chain runs to 312 residues: Phosphate system positive regulatory protein PHO4 (312 aa).

The tract at residues 1–31 is interaction with PHO80; that stretch reads MGRTTSEGIHGFVDDLEPKSSILDKVGDFIT. The tract at residues 35 to 71 is disordered; sequence KRHDGREDFNEQNDELNSQENHNSSENGNENENEQDS. Over residues 49-62 the composition is skewed to low complexity; that stretch reads ELNSQENHNSSENG. Positions 75 to 83 match the 9aaTAD motif; that stretch reads DDLDRAFEL. A transcription activation domain region spans residues 75-99; sequence DDLDRAFELVEGMDMDWMMPSHAHH. Phosphoserine; by PHO85 is present on residues S100, S114, S128, and S152. 2 stretches are compositionally biased toward polar residues: residues 138 to 154 and 196 to 210; these read TTSA…SSPY and PSNS…TAKT. The disordered stretch occupies residues 138–259; sequence TTSANKVTKN…DKRESHKHAE (122 aa). A Nuclear localization signal motif is present at residues 140 to 166; it reads SANKVTKNKSNSSPYLNKRRGKPGPDS. The interaction with PHO80 stretch occupies residues 156–200; the sequence is NKRRGKPGPDSATSLFELPDSVIPTPKPKPKPKQYPKVILPSNST. Residues 201 to 218 form an interaction with PHO2 region; it reads RRVSPVTAKTSSSAEGVV. Residues 203 to 227 are involved in oligomerization; the sequence is VSPVTAKTSSSAEGVVVASESPVIA. S204 is modified (phosphoserine). The span at 211 to 235 shows a compositional bias: low complexity; sequence SSSAEGVVVASESPVIAPHGSSHSR. S223 is modified (phosphoserine; by PHO85). S242 and S243 each carry phosphoserine. A compositionally biased stretch (basic and acidic residues) spans 248-259; the sequence is DDDKRESHKHAE. Positions 250-306 constitute a bHLH domain; sequence DKRESHKHAEQARRNRLAVALHELASLIPAEWKQQNVSAAPSKATTVEAACRYIRHL.

Binds DNA as a homodimer. Interacts with transcription factor PHO2 and binds cooperatively to PHO5 UAS. Interacts with the cyclin-CDK PHO80-PHO85 and the CDK inhibitor (CKI) PHO81. In terms of processing, phosphorylated by the cyclin-CDK PHO80-PHO85 at five residues under high-phosphate conditions, preventing PHO4 from activating the structural PHO genes. Phosphorylation of Ser-114 and Ser-128 promotes nuclear export. Phosphorylation of Ser-152 decreases nuclear import. Phosphorylation of Ser-223 decreases the binding affinity for PHO2.

The protein resides in the cytoplasm. It is found in the nucleus. Transcriptional activator that regulates the expression of repressible phosphatase under phosphate starvation conditions. Binds to the upstream activating sequence (UAS) of several phosphatase encoding PHO genes. Inhibited by the cyclin-CDK PHO80-PHO85 under high-phosphate conditions. The protein is Phosphate system positive regulatory protein PHO4 (PHO4) of Saccharomyces cerevisiae (strain ATCC 204508 / S288c) (Baker's yeast).